A 231-amino-acid polypeptide reads, in one-letter code: MGNSVMEKIKGGLVVSCQALEDEPLHSAFIMSKMALAAVQGGAVGIRANTAKDIRAIQSEVDVPIIGIYKKDYDDSDVFITPTLKEVREICETGVEIVAMDATTRKRPHNEDLKDILSAIRKEFPNTLFMADTGSIEDVYYADSLGFDLIGTTLYGYTEETANKNISDHDFSHMKEVLKSTKRPVIAEGKIDSPSKARQVLTLGCYAVVVGGAVTRPQEITTRFTNEIKKI.

It belongs to the NanE family.

It catalyses the reaction an N-acyl-D-glucosamine 6-phosphate = an N-acyl-D-mannosamine 6-phosphate. It functions in the pathway amino-sugar metabolism; N-acetylneuraminate degradation; D-fructose 6-phosphate from N-acetylneuraminate: step 3/5. Functionally, converts N-acetylmannosamine-6-phosphate (ManNAc-6-P) to N-acetylglucosamine-6-phosphate (GlcNAc-6-P). This Listeria innocua serovar 6a (strain ATCC BAA-680 / CLIP 11262) protein is Putative N-acetylmannosamine-6-phosphate 2-epimerase.